The primary structure comprises 383 residues: Small ribosomal subunit protein mS31 (383 aa).

The transit peptide at 1 to 21 (MLRSLCSIAVRLGGARQPRLL) directs the protein to the mitochondrion. Residues 158–187 (VNEAQIKLQEQRKALLNDVREKVEQEEVEE) are a coiled coil.

The protein belongs to the mitochondrion-specific ribosomal protein mS31 family. Component of the mitochondrial ribosome small subunit (28S) which comprises a 12S rRNA and about 30 distinct proteins.

It localises to the mitochondrion. The sequence is that of Small ribosomal subunit protein mS31 (mrps-31) from Caenorhabditis elegans.